A 67-amino-acid polypeptide reads, in one-letter code: Large ribosomal subunit protein bL32 (67 aa).

Residues 1–19 are compositionally biased toward basic residues; that stretch reads MAVPKRKMSRANTRARRAQ. The tract at residues 1–20 is disordered; the sequence is MAVPKRKMSRANTRARRAQW.

Belongs to the bacterial ribosomal protein bL32 family.

This is Large ribosomal subunit protein bL32 from Paenarthrobacter aurescens (strain TC1).